An 84-amino-acid polypeptide reads, in one-letter code: Neurotoxin BmK-M10 (84 aa).

An N-terminal signal peptide occupies residues 1 to 19; that stretch reads MNYLVMISFALLLMKGVES. The 63-residue stretch at 21 to 83 folds into the LCN-type CS-alpha/beta domain; it reads RDAYIAKPEN…VPIRVPGKCQ (63 aa). Intrachain disulfides connect cysteine 31–cysteine 82, cysteine 35–cysteine 55, cysteine 41–cysteine 65, and cysteine 45–cysteine 67. Arginine 84 is a propeptide (removed by a carboxypeptidase).

In terms of tissue distribution, expressed by the venom gland.

It is found in the secreted. Binds to voltage-dependent sodium channels (Nav) and voltage-dependent delayed rectifier potassium channels and inhibits the inactivation of the activated channels, thereby blocking neuronal transmission. Administration to mice at a dosage of 0.8 mg/kg produces an analgesic effect. The chain is Neurotoxin BmK-M10 from Olivierus martensii (Manchurian scorpion).